Consider the following 837-residue polypeptide: Ribosome-releasing factor 2, mitochondrial (837 aa).

The transit peptide at 1 to 29 (MFSINARTKVPIWVPFIARKGFSMSTRQL) directs the protein to the mitochondrion. Residues 40-331 (LNTRNIGIIA…GVVDYLPSPL (292 aa)) enclose the tr-type G domain. Residues 49–56 (AHIDAGKT), 113–117 (DTPGH), and 167–170 (NKMD) contribute to the GTP site. The segment at 338-359 (ITASTSKVSKKQKQKKNSKVSS) is disordered. The segment covering 345-355 (VSKKQKQKKNS) has biased composition (basic residues).

The protein belongs to the TRAFAC class translation factor GTPase superfamily. Classic translation factor GTPase family. EF-G/EF-2 subfamily.

The protein localises to the mitochondrion. Its function is as follows. Mitochondrial GTPase that mediates the disassembly of ribosomes from messenger RNA at the termination of mitochondrial protein biosynthesis. Not involved in the GTP-dependent ribosomal translocation step during translation elongation. In Meyerozyma guilliermondii (strain ATCC 6260 / CBS 566 / DSM 6381 / JCM 1539 / NBRC 10279 / NRRL Y-324) (Yeast), this protein is Ribosome-releasing factor 2, mitochondrial.